The chain runs to 213 residues: Dephospho-CoA kinase (213 aa).

The DPCK domain maps to 3–202; that stretch reads RIGLTGGIGS…QSYLALADKH (200 aa). Residue 11 to 16 coordinates ATP; that stretch reads GSGKTR.

The protein belongs to the CoaE family.

The protein resides in the cytoplasm. It catalyses the reaction 3'-dephospho-CoA + ATP = ADP + CoA + H(+). It participates in cofactor biosynthesis; coenzyme A biosynthesis; CoA from (R)-pantothenate: step 5/5. Catalyzes the phosphorylation of the 3'-hydroxyl group of dephosphocoenzyme A to form coenzyme A. In Bordetella avium (strain 197N), this protein is Dephospho-CoA kinase.